The primary structure comprises 1190 residues: Wings apart-like protein homolog (1190 aa).

Disordered regions lie at residues 1–23 (MTSR…FDEV) and 46–82 (QKRP…DESL). Positions 1–659 (MTSRFGKTYS…ENQEFTDDIE (659 aa)) are mediates interaction with the cohesin complex. A compositionally biased stretch (basic and acidic residues) spans 54–66 (DIQEIPKKPKVEE). Positions 73-75 (FGF) match the FGF motif 1 motif. A Phosphoserine modification is found at S77. K168 carries the N6-acetyllysine modification. 3 positions are modified to phosphoserine: S221, S223, and S226. Residues 260-286 (LLEMKDDDFKNRLENLNEAIEEDIVQS) are a coiled coil. S347 and S380 each carry phosphoserine. The short motif at 429 to 431 (FGF) is the FGF motif 2 element. Position 443 is a phosphoserine (S443). The short motif at 453-455 (FGF) is the FGF motif 3 element. Phosphoserine occurs at positions 459 and 461. Residues 459–469 (SESEDDEDDDC) are compositionally biased toward acidic residues. Residues 459–553 (SESEDDEDDD…SGPKRSPTKA (95 aa)) are disordered. Residues 494 to 509 (SNDNSQDSQSGTNNAE) are compositionally biased toward polar residues. The segment covering 531 to 540 (QGDKSKENTR) has biased composition (basic and acidic residues). A WAPL domain is found at 626 to 1169 (RREDKELYTV…KKFLSFMNLT (544 aa)). Residues 749-782 (ELEQDASSAKLLNEKDMNKIKEKIRRLCETVHNK) are a coiled coil. S904 is modified (phosphoserine).

This sequence belongs to the WAPL family. In terms of assembly, interacts with the cohesin complex throughout the cell cycle; interacts with both chromatin-bound and soluble pools of the complex. Interacts with RAD21; the interaction is direct. Interacts with PDS5A; the interaction is direct, cohesin-dependent and competitive with CDCA5/SORORIN. Interacts (via FGF motifs) with PDS5B; the interaction is direct. Interacts with a SMC1 protein (SMC1A or SMC1B) and SMC3. As to quaternary structure, (Microbial infection) Isoform 2 interacts with Epstein-Barr virus EBNA2. In terms of processing, deubiquitinated by USP37; leading to stabilization. As to expression, isoform 1 is highly expressed in uterine cervix tumor. Isoform 2 is widely expressed with a high level in skeletal muscle and heart.

It is found in the nucleus. It localises to the chromosome. Its subcellular location is the cytoplasm. In terms of biological role, regulator of sister chromatid cohesion in mitosis which negatively regulates cohesin association with chromatin. Involved in both sister chromatid cohesion during interphase and sister-chromatid resolution during early stages of mitosis. Couples DNA replication to sister chromatid cohesion. Cohesion ensures that chromosome partitioning is accurate in both meiotic and mitotic cells and plays an important role in DNA repair. The chain is Wings apart-like protein homolog from Homo sapiens (Human).